A 145-amino-acid polypeptide reads, in one-letter code: 3-dehydroquinate dehydratase (145 aa).

Y22 (proton acceptor) is an active-site residue. Substrate is bound by residues N74, H80, and D87. H100 functions as the Proton donor in the catalytic mechanism. Substrate-binding positions include 101–102 (IS) and R111.

This sequence belongs to the type-II 3-dehydroquinase family. As to quaternary structure, homododecamer.

The enzyme catalyses 3-dehydroquinate = 3-dehydroshikimate + H2O. It participates in metabolic intermediate biosynthesis; chorismate biosynthesis; chorismate from D-erythrose 4-phosphate and phosphoenolpyruvate: step 3/7. In terms of biological role, catalyzes a trans-dehydration via an enolate intermediate. This Lachnoclostridium phytofermentans (strain ATCC 700394 / DSM 18823 / ISDg) (Clostridium phytofermentans) protein is 3-dehydroquinate dehydratase.